The following is a 95-amino-acid chain: MRWVLAGLTALLLWLQGLLWFGEGGLNDVRGLSRSVEAQREEVDRLRQRNQALEAEVNDLKTGLEALEERARSELGMIREGETFYQIIEREDDAR.

Over methionine 1–tryptophan 3 the chain is Cytoplasmic. Residues valine 4–phenylalanine 21 traverse the membrane as a helical segment. Residues glycine 22–arginine 95 are Periplasmic-facing. The stretch at leucine 26–glycine 76 forms a coiled coil.

The protein belongs to the FtsB family. In terms of assembly, part of a complex composed of FtsB, FtsL and FtsQ.

It is found in the cell inner membrane. In terms of biological role, essential cell division protein. May link together the upstream cell division proteins, which are predominantly cytoplasmic, with the downstream cell division proteins, which are predominantly periplasmic. In Alkalilimnicola ehrlichii (strain ATCC BAA-1101 / DSM 17681 / MLHE-1), this protein is Cell division protein FtsB.